Consider the following 2205-residue polypeptide: Genome polyprotein (2205 aa).

A lipid anchor (N-myristoyl glycine; by host) is attached at Gly-2. Residues 2 to 1518 (GAQVSSQKVG…NINRAMTILQ (1517 aa)) lie on the Cytoplasmic side of the membrane. The interval 579–599 (GLGDLIEGVVEGVTRNALTPL) is amphipathic alpha-helix. The span at 598 to 613 (PLTPVNNLPDTRSSGP) shows a compositional bias: polar residues. The segment at 598–619 (PLTPVNNLPDTRSSGPAHSKET) is disordered. Catalysis depends on for protease 2A activity residues His-899 and Asp-917. Zn(2+) contacts are provided by Cys-934 and Cys-936. Cys-988 serves as the catalytic For protease 2A activity. Cys-994 and His-996 together coordinate Zn(2+). The segment at 1126-1198 (GDSWLKKFTE…HQSCPSQEHQ (73 aa)) is membrane-binding. The oligomerization stretch occupies residues 1126–1264 (GDSWLKKFTE…SPGTGKSVAT (139 aa)). The RNA-binding stretch occupies residues 1147-1151 (SNKIS). An SF3 helicase domain is found at 1230 to 1386 (EHTINNYVQF…SEYSRDGKLN (157 aa)). 1254 to 1261 (GSPGTGKS) provides a ligand contact to ATP. Cys-1394, Cys-1397, Cys-1406, and Cys-1411 together coordinate Zn(2+). The segment at 1394–1411 (CKNCHQPANFKRCCPLVC) adopts a C4-type zinc-finger fold. Positions 1438–1445 (ERNRRSSI) are RNA-binding. The interval 1449–1454 (MEALFQ) is oligomerization. The stretch at 1519 to 1534 (AVTTFAAVAGVVYVMY) is an intramembrane region. Residues 1535-2205 (KLFAGHQGAY…TLYRRWLDSF (671 aa)) are Cytoplasmic-facing. An O-(5'-phospho-RNA)-tyrosine modification is found at Tyr-1544. Residues 1564–1742 (GPGFDYAVAM…FAAALKRSYF (179 aa)) form the Peptidase C3 domain. Catalysis depends on for protease 3C activity residues His-1603, Glu-1634, and Cys-1710. Positions 1971 to 2086 (MEEKLFDYTG…SYPHEVDASL (116 aa)) constitute a RdRp catalytic domain. The Mg(2+) site is built by Asp-1977 and Asp-2072.

It belongs to the picornaviruses polyprotein family. Interacts with capsid protein VP1 and capsid protein VP3 to form heterotrimeric protomers. As to quaternary structure, interacts with capsid protein VP0, and capsid protein VP3 to form heterotrimeric protomers. Interacts with human PVR. Five protomers subsequently associate to form pentamers which serve as building blocks for the capsid. Interacts with capsid protein VP2, capsid protein VP3 and capsid protein VP4 following cleavage of capsid protein VP0. In terms of assembly, interacts with capsid protein VP1 and capsid protein VP3 in the mature capsid. Interacts with capsid protein VP0 and capsid protein VP1 to form heterotrimeric protomers. Five protomers subsequently associate to form pentamers which serve as building blocks for the capsid. Interacts with capsid protein VP4 in the mature capsid. Interacts with protein 2C; this interaction may be important for virion morphogenesis. As to quaternary structure, interacts with capsid protein VP1 and capsid protein VP3. In terms of assembly, homodimer. Homohexamer; forms a hexameric ring structure with 6-fold symmetry characteristic of AAA+ ATPases. Interacts (via N-terminus) with host RTN3 (via reticulon domain); this interaction is important for viral replication. Interacts with capsid protein VP3; this interaction may be important for virion morphogenesis. As to quaternary structure, interacts with protein 3CD. In terms of assembly, homodimer. Interacts with host GBF1. Interacts (via GOLD domain) with host ACBD3 (via GOLD domain); this interaction allows the formation of a viral protein 3A/ACBD3 heterotetramer with a 2:2 stoichiometry, which will stimulate the recruitment of host PI4KB in order to synthesize PI4P at the viral RNA replication sites. Interacts with RNA-directed RNA polymerase. As to quaternary structure, interacts with protein 3AB and with RNA-directed RNA polymerase. In terms of assembly, interacts with Viral protein genome-linked and with protein 3CD. Mg(2+) is required as a cofactor. Post-translationally, specific enzymatic cleavages in vivo by the viral proteases yield processing intermediates and the mature proteins. Myristoylation is required for the formation of pentamers during virus assembly. Further assembly of 12 pentamers and a molecule of genomic RNA generates the provirion. In terms of processing, during virion maturation, immature virions are rendered infectious following cleavage of VP0 into VP4 and VP2. This maturation seems to be an autocatalytic event triggered by the presence of RNA in the capsid and it is followed by a conformational change infectious virion. Post-translationally, myristoylation is required during RNA encapsidation and formation of the mature virus particle. VPg is uridylylated by the polymerase into VPg-pUpU. This acts as a nucleotide-peptide primer for the genomic RNA replication.

It localises to the virion. The protein resides in the host cytoplasm. It is found in the host cytoplasmic vesicle membrane. Its subcellular location is the host nucleus. It carries out the reaction a ribonucleoside 5'-triphosphate + H2O = a ribonucleoside 5'-diphosphate + phosphate + H(+). It catalyses the reaction Selective cleavage of Tyr-|-Gly bond in the picornavirus polyprotein.. The enzyme catalyses RNA(n) + a ribonucleoside 5'-triphosphate = RNA(n+1) + diphosphate. The catalysed reaction is Selective cleavage of Gln-|-Gly bond in the poliovirus polyprotein. In other picornavirus reactions Glu may be substituted for Gln, and Ser or Thr for Gly.. Its activity is regulated as follows. Replication or transcription is subject to high level of random mutations by the nucleotide analog ribavirin. Functionally, forms an icosahedral capsid of pseudo T=3 symmetry with capsid proteins VP2 and VP3. The capsid is 300 Angstroms in diameter, composed of 60 copies of each capsid protein and enclosing the viral positive strand RNA genome. Capsid protein VP1 mainly forms the vertices of the capsid. Capsid protein VP1 interacts with host cell receptor PVR to provide virion attachment to target host cells. This attachment induces virion internalization predominantly through clathrin- and caveolin-independent endocytosis in Hela cells and through caveolin-mediated endocytosis in brain microvascular endothelial cells. Tyrosine kinases are probably involved in the entry process. Virus binding to PVR induces increased junctional permeability and rearrangement of junctional proteins. Modulation of endothelial tight junctions, as well as cytolytic infection of endothelial cells themselves, may result in loss of endothelial integrity which may help the virus to reach the CNS. After binding to its receptor, the capsid undergoes conformational changes. Capsid protein VP1 N-terminus (that contains an amphipathic alpha-helix) and capsid protein VP4 are externalized. Together, they shape a pore in the host membrane through which viral genome is translocated to host cell cytoplasm. Forms an icosahedral capsid of pseudo T=3 symmetry with capsid proteins VP2 and VP3. The capsid is 300 Angstroms in diameter, composed of 60 copies of each capsid protein and enclosing the viral positive strand RNA genome. In terms of biological role, lies on the inner surface of the capsid shell. After binding to the host receptor, the capsid undergoes conformational changes. Capsid protein VP4 is released, Capsid protein VP1 N-terminus is externalized, and together, they shape a pore in the host membrane through which the viral genome is translocated into the host cell cytoplasm. Its function is as follows. Component of immature procapsids, which is cleaved into capsid proteins VP4 and VP2 after maturation. Allows the capsid to remain inactive before the maturation step. Functionally, cysteine protease that cleaves viral polyprotein and specific host proteins. It is responsible for the autocatalytic cleavage between the P1 and P2 regions, which is the first cleavage occurring in the polyprotein. Also cleaves the host translation initiation factor EIF4G1, in order to shut down the capped cellular mRNA translation. Inhibits the host nucleus-cytoplasm protein and RNA trafficking by cleaving host members of the nuclear pores including NUP98, NUP62 and NUP153. Counteracts stress granule formation probably by antagonizing its assembly or promoting its dissassembly. Cleaves and inhibits host IFIH1/MDA5, thereby inhibiting the type-I IFN production and the establishment of the antiviral state. Cleaves and inhibits host MAVS, thereby inhibiting the type-I IFN production and the establishment of the antiviral state. Plays an essential role in the virus replication cycle by acting as a viroporin. Creates a pore in the host endoplasmic reticulum and as a consequence releases Ca2+ in the cytoplasm of infected cell. In turn, high levels of cytoplasmic calcium may trigger membrane trafficking and transport of viral ER-associated proteins to viroplasms, sites of viral genome replication. In terms of biological role, induces and associates with structural rearrangements of intracellular membranes. Displays RNA-binding, nucleotide binding and NTPase activities. May play a role in virion morphogenesis and viral RNA encapsidation by interacting with the capsid protein VP3. Its function is as follows. Localizes the viral replication complex to the surface of membranous vesicles. Together with protein 3CD binds the Cis-Active RNA Element (CRE) which is involved in RNA synthesis initiation. Acts as a cofactor to stimulate the activity of 3D polymerase, maybe through a nucleid acid chaperone activity. Functionally, localizes the viral replication complex to the surface of membranous vesicles. It inhibits host cell endoplasmic reticulum-to-Golgi apparatus transport and causes the disassembly of the Golgi complex, possibly through GBF1 interaction. This would result in depletion of MHC, trail receptors and IFN receptors at the host cell surface. Plays an essential role in viral RNA replication by recruiting ACBD3 and PI4KB at the viral replication sites, thereby allowing the formation of the rearranged membranous structures where viral replication takes place. Acts as a primer for viral RNA replication and remains covalently bound to viral genomic RNA. VPg is uridylylated prior to priming replication into VPg-pUpU. The oriI viral genomic sequence may act as a template for this. The VPg-pUpU is then used as primer on the genomic RNA poly(A) by the RNA-dependent RNA polymerase to replicate the viral genome. During genome replication, the VPg-RNA linkage is removed by the host TDP2, thereby accelerating replication. During the late stage of the replication cycle, host TDP2 is excluded from sites of viral RNA synthesis and encapsidation, allowing for the generation of progeny virions. In terms of biological role, involved in the viral replication complex and viral polypeptide maturation. It exhibits protease activity with a specificity and catalytic efficiency that is different from protease 3C. Protein 3CD lacks polymerase activity. Protein 3CD binds to the 5'UTR of the viral genome. Its function is as follows. Major viral protease that mediates proteolytic processing of the polyprotein. Cleaves host EIF5B, contributing to host translation shutoff. Also cleaves host PABPC1, contributing to host translation shutoff. Cleaves host RIGI and thus contributes to the inhibition of type I interferon production. Cleaves host NLRP1, triggers host N-glycine-mediated degradation of the autoinhibitory NLRP1 N-terminal fragment. Inhibits the integrated stress response (ISR) in the infected cell by cleaving host G3BP1. Stress granule formation is thus inhibited, which allows protein synthesis and viral replication. Functionally, replicates the viral genomic RNA on the surface of intracellular membranes. May form linear arrays of subunits that propagate along a strong head-to-tail interaction called interface-I. Covalently attaches UMP to a tyrosine of VPg, which is used to prime RNA synthesis. The positive stranded RNA genome is first replicated at virus induced membranous vesicles, creating a dsRNA genomic replication form. This dsRNA is then used as template to synthesize positive stranded RNA genomes. ss(+)RNA genomes are either translated, replicated or encapsidated. The sequence is that of Genome polyprotein from Homo sapiens (Human).